Consider the following 459-residue polypeptide: Glycosyl hydrolase family 109 protein 1 (459 aa).

The tat-type signal signal peptide spans 1–31 (MHNIHRRHFLKAAGAVTAGLVTANIALNANA). NAD(+) is bound by residues 64-65 (ER), D86, 135-138 (WEWH), 155-156 (EV), and N184. Substrate is bound by residues Y213, R232, 244 to 247 (YPTH), and Y326. Y244 contacts NAD(+).

Belongs to the Gfo/Idh/MocA family. Glycosyl hydrolase 109 subfamily. NAD(+) is required as a cofactor. Predicted to be exported by the Tat system. The position of the signal peptide cleavage has not been experimentally proven.

Glycosidase. The protein is Glycosyl hydrolase family 109 protein 1 of Shewanella sp. (strain MR-4).